We begin with the raw amino-acid sequence, 572 residues long: Proline--tRNA ligase (572 aa).

The protein belongs to the class-II aminoacyl-tRNA synthetase family. ProS type 1 subfamily. As to quaternary structure, homodimer.

It is found in the cytoplasm. It catalyses the reaction tRNA(Pro) + L-proline + ATP = L-prolyl-tRNA(Pro) + AMP + diphosphate. Catalyzes the attachment of proline to tRNA(Pro) in a two-step reaction: proline is first activated by ATP to form Pro-AMP and then transferred to the acceptor end of tRNA(Pro). As ProRS can inadvertently accommodate and process non-cognate amino acids such as alanine and cysteine, to avoid such errors it has two additional distinct editing activities against alanine. One activity is designated as 'pretransfer' editing and involves the tRNA(Pro)-independent hydrolysis of activated Ala-AMP. The other activity is designated 'posttransfer' editing and involves deacylation of mischarged Ala-tRNA(Pro). The misacylated Cys-tRNA(Pro) is not edited by ProRS. The polypeptide is Proline--tRNA ligase (Salmonella newport (strain SL254)).